The sequence spans 143 residues: Hypoxic response protein 1 (143 aa).

CBS domains are found at residues Met8 to Pro65 and Leu73 to Phe131. Cys14 and Cys39 form a disulfide bridge. Zn(2+) is bound by residues His97 and His122.

Homodimer.

It localises to the secreted. Functionally, unlike some other CBS-domain containing proteins does not seem to bind AMP. This is Hypoxic response protein 1 (hrp1) from Mycobacterium tuberculosis (strain CDC 1551 / Oshkosh).